The chain runs to 43 residues: Protein PsbN (43 aa).

A helical membrane pass occupies residues 5-25 (LILSIFIFSLLLGITSYSIYI).

It belongs to the PsbN family.

The protein localises to the plastid. Its subcellular location is the chloroplast thylakoid membrane. Its function is as follows. May play a role in photosystem I and II biogenesis. This is Protein PsbN from Cyanidium caldarium (Red alga).